The primary structure comprises 397 residues: Mannonate dehydratase (397 aa).

The protein belongs to the mannonate dehydratase family. Fe(2+) is required as a cofactor. Mn(2+) serves as cofactor.

It carries out the reaction D-mannonate = 2-dehydro-3-deoxy-D-gluconate + H2O. It participates in carbohydrate metabolism; pentose and glucuronate interconversion. Catalyzes the dehydration of D-mannonate. This is Mannonate dehydratase from Yersinia pestis bv. Antiqua (strain Antiqua).